Consider the following 170-residue polypeptide: NADH-quinone oxidoreductase subunit B (170 aa).

Cys42, Cys43, Cys107, and Cys136 together coordinate [4Fe-4S] cluster.

Belongs to the complex I 20 kDa subunit family. In terms of assembly, NDH-1 is composed of 14 different subunits. Subunits NuoB, C, D, E, F, and G constitute the peripheral sector of the complex. [4Fe-4S] cluster serves as cofactor.

It localises to the cell inner membrane. It carries out the reaction a quinone + NADH + 5 H(+)(in) = a quinol + NAD(+) + 4 H(+)(out). In terms of biological role, NDH-1 shuttles electrons from NADH, via FMN and iron-sulfur (Fe-S) centers, to quinones in the respiratory chain. The immediate electron acceptor for the enzyme in this species is believed to be ubiquinone. Couples the redox reaction to proton translocation (for every two electrons transferred, four hydrogen ions are translocated across the cytoplasmic membrane), and thus conserves the redox energy in a proton gradient. This is NADH-quinone oxidoreductase subunit B from Campylobacter curvus (strain 525.92).